The following is a 444-amino-acid chain: Serine--tRNA ligase (444 aa).

Residue 249–251 (TAE) coordinates L-serine. Residues 280–282 (RRE) and Val-296 contribute to the ATP site. Position 303 (Glu-303) interacts with L-serine. 367-370 (EIVS) serves as a coordination point for ATP. Thr-401 lines the L-serine pocket.

This sequence belongs to the class-II aminoacyl-tRNA synthetase family. Type-1 seryl-tRNA synthetase subfamily. As to quaternary structure, homodimer. The tRNA molecule binds across the dimer.

It is found in the cytoplasm. It catalyses the reaction tRNA(Ser) + L-serine + ATP = L-seryl-tRNA(Ser) + AMP + diphosphate + H(+). It carries out the reaction tRNA(Sec) + L-serine + ATP = L-seryl-tRNA(Sec) + AMP + diphosphate + H(+). It functions in the pathway aminoacyl-tRNA biosynthesis; selenocysteinyl-tRNA(Sec) biosynthesis; L-seryl-tRNA(Sec) from L-serine and tRNA(Sec): step 1/1. Catalyzes the attachment of serine to tRNA(Ser). Is also able to aminoacylate tRNA(Sec) with serine, to form the misacylated tRNA L-seryl-tRNA(Sec), which will be further converted into selenocysteinyl-tRNA(Sec). The chain is Serine--tRNA ligase from Picrophilus torridus (strain ATCC 700027 / DSM 9790 / JCM 10055 / NBRC 100828 / KAW 2/3).